The following is a 175-amino-acid chain: Large ribosomal subunit protein uL10 (175 aa).

Belongs to the universal ribosomal protein uL10 family. In terms of assembly, part of the ribosomal stalk of the 50S ribosomal subunit. The N-terminus interacts with L11 and the large rRNA to form the base of the stalk. The C-terminus forms an elongated spine to which L12 dimers bind in a sequential fashion forming a multimeric L10(L12)X complex.

Forms part of the ribosomal stalk, playing a central role in the interaction of the ribosome with GTP-bound translation factors. This chain is Large ribosomal subunit protein uL10, found in Prochlorococcus marinus (strain SARG / CCMP1375 / SS120).